Reading from the N-terminus, the 393-residue chain is Staphopain B (393 aa).

Residues 1-36 (MNSSYKSRVFNIISIIMVSMLILSLGAFANNNKAKA) form the signal peptide. A propeptide spanning residues 37–219 (DSHSKQLEIN…KVEENEAIQE (183 aa)) is cleaved from the precursor. Catalysis depends on residues cysteine 243, histidine 340, and asparagine 360.

Belongs to the peptidase C47 family. In the cytoplasm, prematurely activated/folded SspB forms a stable non-covalent complex with SspC. Post-translationally, proteolytically cleaved by staphylococcal serine protease (SspA).

The protein resides in the secreted. Prematurely activated/folded staphopain B is inhibited by staphostatin B (SspC), which is probably required to protect staphylococcal cytoplasmic proteins from degradation by SspB. Its function is as follows. Cysteine protease that plays an important role in the inhibition of host innate immune response. Degrades host elastin, fibrogen, fibronectin and kininogen. Blocks phagocytosis of opsonised S.aureus by neutrophils and monocytes by inducing their death in a proteolytic activity-dependent manner. Decreases surface expression of the 'don't eat me' signal CD31 on neutrophils. Cleaves host galectin-3/LGALS3, thereby inhibiting the neutrophil-activating ability of the lectin. The polypeptide is Staphopain B (sspB) (Staphylococcus aureus (strain MSSA476)).